Consider the following 512-residue polypeptide: Gamma-aminobutyric acid receptor subunit beta-2 (512 aa).

Positions 1–25 (MWRVRKRGYFGIWSFPLIIAAVCAQ) are cleaved as a signal peptide. Topologically, residues 26–244 (SVNDPSNMSL…SFKLKRNIGY (219 aa)) are extracellular. N32 and N104 each carry an N-linked (GlcNAc...) asparagine glycan. Y121 provides a ligand contact to histamine. A disulfide bridge connects residues C160 and C174. N173 carries an N-linked (GlcNAc...) asparagine glycan. Histamine-binding positions include 180-181 (SY) and T226. 4-aminobutanoate is bound by residues Y181 and T226. A run of 3 helical transmembrane segments spans residues 245 to 266 (FILQTYMPSILITILSWVSFWI), 270 to 292 (ASAARVALGITTVLTMTTINTHL), and 304 to 326 (AIDMYLMGCFVFVFMALLEYALV). At 327–489 (NYIFFGRGPQ…DLTDVNAIDR (163 aa)) the chain is on the cytoplasmic side. Y441 carries the phosphotyrosine modification. The chain crosses the membrane as a helical span at residues 490–511 (WSRIFFPVVFSFFNIVYWLYYV).

It belongs to the ligand-gated ion channel (TC 1.A.9) family. Gamma-aminobutyric acid receptor (TC 1.A.9.5) subfamily. GABRB2 sub-subfamily. As to quaternary structure, heteropentamer, formed by a combination of alpha (GABRA1-6), beta (GABRB1-3), gamma (GABRG1-3), delta (GABRD), epsilon (GABRE), rho (GABRR1-3), pi (GABRP) and theta (GABRQ) chains, each subunit exhibiting distinct physiological and pharmacological properties. Interacts with UBQLN1. May interact with KIF21B. Identified in a complex of 720 kDa composed of LHFPL4, NLGN2, GABRA1, GABRB2, GABRG2 and GABRB3. Post-translationally, glycosylated.

Its subcellular location is the postsynaptic cell membrane. It localises to the cell membrane. It is found in the cytoplasmic vesicle. It catalyses the reaction chloride(in) = chloride(out). Its activity is regulated as follows. Allosterically activated by benzodiazepines and the anesthetic etomidate. Inhibited by the antagonist bicuculline. Potentiated by histamine. Functionally, beta subunit of the heteropentameric ligand-gated chloride channel gated by gamma-aminobutyric acid (GABA), a major inhibitory neurotransmitter in the brain. GABA-gated chloride channels, also named GABA(A) receptors (GABAAR), consist of five subunits arranged around a central pore and contain GABA active binding site(s) located at the alpha and beta subunit interface(s). When activated by GABA, GABAARs selectively allow the flow of chloride anions across the cell membrane down their electrochemical gradient. Chloride influx into the postsynaptic neuron following GABAAR opening decreases the neuron ability to generate a new action potential, thereby reducing nerve transmission. GABAARs containing alpha-1 and beta-2 or -3 subunits exhibit synaptogenic activity; the gamma-2 subunit being necessary but not sufficient to induce rapid synaptic contacts formation. Extrasynaptic beta-2 receptors contribute to the tonic GABAergic inhibition. Beta-containing GABAARs can simultaneously bind GABA and histamine where histamine binds at the interface of two neighboring beta subunits, which may be involved in the regulation of sleep and wakefulness. The chain is Gamma-aminobutyric acid receptor subunit beta-2 from Mus musculus (Mouse).